We begin with the raw amino-acid sequence, 479 residues long: Anaerobic nitric oxide reductase flavorubredoxin (479 aa).

The zinc metallo-hydrolase stretch occupies residues 30–210 (LRGSSYNSYL…PFSRLVTPKI (181 aa)). Fe cation is bound by residues histidine 79, glutamate 81, aspartate 83, histidine 147, aspartate 166, and histidine 227. A Flavodoxin-like domain is found at 254-393 (ITIFYDTMSN…LCREHGREIA (140 aa)). Residues 260-264 (TMSNN) and 342-369 (AFGSHGWSGGAVDRLSTRLQDAGFEMSL) each bind FMN. The Rubredoxin-like domain maps to 423–474 (GPRMQCSVCQWIYDPAKGEPMQDVAPGTPWSEVPDNFLCPECSLGKDVFDEL). Fe cation-binding residues include cysteine 428, cysteine 431, cysteine 461, and cysteine 464.

This sequence in the N-terminal section; belongs to the zinc metallo-hydrolase group 3 family. In terms of assembly, homotetramer. Requires Fe cation as cofactor. FMN serves as cofactor.

The protein resides in the cytoplasm. It participates in nitrogen metabolism; nitric oxide reduction. Its function is as follows. Anaerobic nitric oxide reductase; uses NADH to detoxify nitric oxide (NO), protecting several 4Fe-4S NO-sensitive enzymes. Has at least 2 reductase partners, only one of which (NorW, flavorubredoxin reductase) has been identified. NO probably binds to the di-iron center; electrons enter from the NorW at rubredoxin and are transferred sequentially to the FMN center and the di-iron center. Also able to function as an aerobic oxygen reductase. This chain is Anaerobic nitric oxide reductase flavorubredoxin, found in Shigella sonnei (strain Ss046).